The sequence spans 196 residues: Protein GrpE (196 aa).

Residues 1-40 form a disordered region; that stretch reads MSSKEQKTPEGQAPEEIIMDQHEEVEAVEPNDSAEQVDPR.

The protein belongs to the GrpE family. As to quaternary structure, homodimer.

It is found in the cytoplasm. Functionally, participates actively in the response to hyperosmotic and heat shock by preventing the aggregation of stress-denatured proteins, in association with DnaK and GrpE. It is the nucleotide exchange factor for DnaK and may function as a thermosensor. Unfolded proteins bind initially to DnaJ; upon interaction with the DnaJ-bound protein, DnaK hydrolyzes its bound ATP, resulting in the formation of a stable complex. GrpE releases ADP from DnaK; ATP binding to DnaK triggers the release of the substrate protein, thus completing the reaction cycle. Several rounds of ATP-dependent interactions between DnaJ, DnaK and GrpE are required for fully efficient folding. The protein is Protein GrpE of Salmonella enteritidis PT4 (strain P125109).